Reading from the N-terminus, the 543-residue chain is CTP synthase (543 aa).

Residues 1 to 265 (MTRYVFITGG…DREVLRHFGL (265 aa)) form an amidoligase domain region. S13 provides a ligand contact to CTP. UTP is bound at residue S13. An ATP-binding site is contributed by 14-19 (SLGKGI). Y54 serves as a coordination point for L-glutamine. D71 contributes to the ATP binding site. Residues D71 and E139 each coordinate Mg(2+). Residues 146-148 (DIE), 186-191 (KTKPTQ), and K222 contribute to the CTP site. UTP contacts are provided by residues 186-191 (KTKPTQ) and K222. V240 is an ATP binding site. The Glutamine amidotransferase type-1 domain maps to 291-542 (TIAVVGKYTN…IEAAVKQMRL (252 aa)). Residue G353 participates in L-glutamine binding. C380 acts as the Nucleophile; for glutamine hydrolysis in catalysis. Residues 381–384 (FGMQ), E404, and R470 each bind L-glutamine. Catalysis depends on residues H515 and E517.

It belongs to the CTP synthase family. Homotetramer.

It carries out the reaction UTP + L-glutamine + ATP + H2O = CTP + L-glutamate + ADP + phosphate + 2 H(+). The catalysed reaction is L-glutamine + H2O = L-glutamate + NH4(+). It catalyses the reaction UTP + NH4(+) + ATP = CTP + ADP + phosphate + 2 H(+). Its pathway is pyrimidine metabolism; CTP biosynthesis via de novo pathway; CTP from UDP: step 2/2. With respect to regulation, allosterically activated by GTP, when glutamine is the substrate; GTP has no effect on the reaction when ammonia is the substrate. The allosteric effector GTP functions by stabilizing the protein conformation that binds the tetrahedral intermediate(s) formed during glutamine hydrolysis. Inhibited by the product CTP, via allosteric rather than competitive inhibition. Its function is as follows. Catalyzes the ATP-dependent amination of UTP to CTP with either L-glutamine or ammonia as the source of nitrogen. Regulates intracellular CTP levels through interactions with the four ribonucleotide triphosphates. This chain is CTP synthase, found in Acidiphilium cryptum (strain JF-5).